Reading from the N-terminus, the 298-residue chain is Factor-induced gene 1 protein (298 aa).

The next 4 helical transmembrane spans lie at isoleucine 17–cysteine 37, valine 163–valine 183, phenylalanine 195–histidine 215, and valine 243–phenylalanine 263. The residue at position 288 (serine 288) is a Phosphoserine. Threonine 293 is modified (phosphothreonine). Serine 296 is subject to Phosphoserine.

The protein localises to the membrane. Required for efficient mating. This Saccharomyces cerevisiae (strain ATCC 204508 / S288c) (Baker's yeast) protein is Factor-induced gene 1 protein (FIG1).